The sequence spans 108 residues: UPF0060 membrane protein SAB2216c (108 aa).

4 helical membrane passes run 5–25 (IFIF…IWLW), 31–51 (CSLV…IATF), 60–80 (VYAA…MVVD), and 86–106 (KYDV…LLPS).

It belongs to the UPF0060 family.

The protein resides in the cell membrane. This Staphylococcus aureus (strain bovine RF122 / ET3-1) protein is UPF0060 membrane protein SAB2216c.